Reading from the N-terminus, the 732-residue chain is MKCRFEFEMNNLKEIYEFGEVAKQTNGSVLLKSGKTVMLATVVMEKEMVDEDFLPLTVQYIEKSYAAGKIPGGFVKREQKPGDFETLTARIVDRALRPLFPKGYLYPTVITVMVLSADPESDLQVLALNAASAALFVSDIPVRKAVSGLRVAKVDGEVLFNPPLSKLKESTLDLYLAGTKEELLMIEMAAIGSYKTEVVPTTVDPLMDPTLAEEVITIKEPNAMKEEELASIIAQGKDVIQIACNEYEKYFIESAKEQLELELLPQTIDEDIWTYVEEIYAADIKEAVQAMAKSERNELLKEIAKKISEDDVAKEQGWEYETIYKVVEKYKRKIVREMILNEGKRADGRGLKDVRPIDIKTNILPSAHGSCLFTRGETQALVVCTIGEKTDAQMYEMLTSKGPEYEHFMVHYNFPPFSVGEAKPISAPGRRELGHGNLARRALEPVVDVPEDKTYRLVSEILESNGSSSMATVCGGALALKAANIDLADLVAGVAMGLIVEDDKYAILTDIMGLEDHDGDMDFKVAGTHDGVTAMQMDIKLGGVQQEILEQALQQAREARLHILKIMEEAAEKIEINEENLPSSHTITVHPSKIVDIIGQAGKTIKEIIEKFEVSIDIDRDKGKVKVTGKNRPKVIAACDYIQEITNKPKPEPVKFQEGDILKGKIKRTTNFGAFVELPGGVDGLLHISKLSSGRVERVEDVVNIGDEVEVEVLSQKGHKIELGLRQVLKKA.

Mg(2+) is bound by residues Asp-516 and Asp-522. Residues 582 to 642 form the KH domain; that stretch reads PSSHTITVHP…PKVIAACDYI (61 aa). The S1 motif domain occupies 659-726; sequence GDILKGKIKR…KGHKIELGLR (68 aa).

Belongs to the polyribonucleotide nucleotidyltransferase family. Requires Mg(2+) as cofactor.

Its subcellular location is the cytoplasm. The catalysed reaction is RNA(n+1) + phosphate = RNA(n) + a ribonucleoside 5'-diphosphate. In terms of biological role, involved in mRNA degradation. Catalyzes the phosphorolysis of single-stranded polyribonucleotides processively in the 3'- to 5'-direction. The polypeptide is Polyribonucleotide nucleotidyltransferase (Nitratiruptor sp. (strain SB155-2)).